Reading from the N-terminus, the 292-residue chain is NAD kinase (292 aa).

Asp73 functions as the Proton acceptor in the catalytic mechanism. NAD(+)-binding positions include 73–74, 147–148, His158, Arg175, Asp177, 188–193, and Gln247; these read DG, NE, and TAYSLS.

It belongs to the NAD kinase family. A divalent metal cation serves as cofactor.

It is found in the cytoplasm. The enzyme catalyses NAD(+) + ATP = ADP + NADP(+) + H(+). Functionally, involved in the regulation of the intracellular balance of NAD and NADP, and is a key enzyme in the biosynthesis of NADP. Catalyzes specifically the phosphorylation on 2'-hydroxyl of the adenosine moiety of NAD to yield NADP. In Shigella dysenteriae serotype 1 (strain Sd197), this protein is NAD kinase.